The primary structure comprises 960 residues: Chromosome transmission fidelity protein 18 (960 aa).

Disordered regions lie at residues 56 to 79 (DLFHSSQPVGSPTRNGDDIPSTLD) and 91 to 113 (DISEDETINQRHAPQTDYRYPNT). Polar residues predominate over residues 58–69 (FHSSQPVGSPTR). 423–430 (GLAGAGKT) is a binding site for ATP.

It belongs to the activator 1 small subunits family. CTF18 subfamily. As to quaternary structure, component of the ctf18-RFC complex which consists of ctf18, ctf8, dcc1, rfc2, rfc3, rfc4 and rfc5.

It localises to the nucleus. Its function is as follows. Essential for the fidelity of chromosome transmission. Required for the DNA replication block checkpoint. Replication factor C (RFC) complex has an essential but redundant activity in sister chromatid cohesion establishment. Acts as a PCNA loader, loading PCNA onto primed templates. An RFC-like complex (ctf18-RFC) is formed where ctf18 replaces rfc1 in the RFC complex along with the association of dcc1 and ctf8. This complex is required for efficient establishment of chromosome cohesion during S-phase. The polypeptide is Chromosome transmission fidelity protein 18 (ctf18) (Schizosaccharomyces pombe (strain 972 / ATCC 24843) (Fission yeast)).